Here is a 330-residue protein sequence, read N- to C-terminus: Carbonic anhydrase (330 aa).

The tract at residues 1-109 (MSAASAFAMN…AATRIDQITA (109 aa)) is chloroplast transit peptide-like.

This sequence belongs to the beta-class carbonic anhydrase family.

It localises to the cytoplasm. The catalysed reaction is hydrogencarbonate + H(+) = CO2 + H2O. Its function is as follows. Reversible hydration of carbon dioxide. The chain is Carbonic anhydrase from Flaveria bidentis (Coastal plain yellowtops).